The sequence spans 695 residues: F-box only protein 34 (695 aa).

Disordered stretches follow at residues G239–P275, L316–L373, and G472–S524. One can recognise an F-box domain in the interval Q556–D608.

In terms of assembly, directly interacts with SKP1 and CUL1.

In terms of biological role, substrate-recognition component of the SCF (SKP1-CUL1-F-box protein)-type E3 ubiquitin ligase complex. The sequence is that of F-box only protein 34 (Fbxo34) from Mus musculus (Mouse).